The chain runs to 212 residues: Ribonuclease HII (212 aa).

The RNase H type-2 domain maps to 1-206 (MILVGIDEAG…LQDIAPNYYI (206 aa)). A divalent metal cation-binding residues include Asp7, Glu8, and Asp104.

It belongs to the RNase HII family. The cofactor is Mn(2+). Requires Mg(2+) as cofactor.

Its subcellular location is the cytoplasm. The catalysed reaction is Endonucleolytic cleavage to 5'-phosphomonoester.. Its function is as follows. Endonuclease that specifically degrades the RNA of RNA-DNA hybrids. In Sulfolobus acidocaldarius (strain ATCC 33909 / DSM 639 / JCM 8929 / NBRC 15157 / NCIMB 11770), this protein is Ribonuclease HII.